Reading from the N-terminus, the 447-residue chain is C4-dicarboxylate transport protein (447 aa).

8 consecutive transmembrane segments (helical) span residues 22–42 (FQVI…PLVG), 52–72 (FINL…VTGI), 90–110 (AYFL…AHVV), 159–179 (GNIL…ASVG), 199–219 (LVHI…AFTI), 232–252 (WLVG…LGVV), 325–347 (LFIA…LLVA), and 366–386 (AATL…ILGV).

It belongs to the dicarboxylate/amino acid:cation symporter (DAACS) (TC 2.A.23) family.

It localises to the cell inner membrane. Functionally, responsible for the transport of dicarboxylates such as succinate, fumarate, and malate from the periplasm across the membrane. The protein is C4-dicarboxylate transport protein of Stenotrophomonas maltophilia (strain R551-3).